The primary structure comprises 229 residues: Non-structural protein V (229 aa).

Composition is skewed to polar residues over residues 30–46 (ATSQSSLNKPPSQSSRT) and 82–112 (GRQNLDSLSMISNKPQTGTLLMGSDTQLPSP). A disordered region spans residues 30-112 (ATSQSSLNKP…MGSDTQLPSP (83 aa)). Residues histidine 178, cysteine 197, cysteine 201, cysteine 213, cysteine 215, cysteine 218, cysteine 222, and cysteine 225 each contribute to the Zn(2+) site.

This sequence belongs to the paramyxoviruses V protein family.

Blocks host interferon signaling. This is Non-structural protein V (P/V) from Homo sapiens (Human).